Here is a 1033-residue protein sequence, read N- to C-terminus: Isoleucine--tRNA ligase 2 (1033 aa).

The short motif at 47 to 57 (PTANGLPHVGH) is the 'HIGH' region element. The 'KMSKS' region motif lies at 590 to 594 (KMSKS). Position 593 (K593) interacts with ATP.

The protein belongs to the class-I aminoacyl-tRNA synthetase family. IleS type 2 subfamily. As to quaternary structure, monomer. It depends on Zn(2+) as a cofactor.

It is found in the cytoplasm. The catalysed reaction is tRNA(Ile) + L-isoleucine + ATP = L-isoleucyl-tRNA(Ile) + AMP + diphosphate. In terms of biological role, catalyzes the attachment of isoleucine to tRNA(Ile). As IleRS can inadvertently accommodate and process structurally similar amino acids such as valine, to avoid such errors it has two additional distinct tRNA(Ile)-dependent editing activities. One activity is designated as 'pretransfer' editing and involves the hydrolysis of activated Val-AMP. The other activity is designated 'posttransfer' editing and involves deacylation of mischarged Val-tRNA(Ile). The sequence is that of Isoleucine--tRNA ligase 2 from Bacillus cereus (strain ZK / E33L).